Consider the following 551-residue polypeptide: Cation/acetate symporter ActP (551 aa).

Helical transmembrane passes span 5 to 25, 34 to 54, 77 to 97, 104 to 124, 150 to 170, 184 to 204, 207 to 227, 263 to 283, 304 to 324, 356 to 376, 406 to 426, 430 to 450, 469 to 489, and 498 to 518; these read HWSA…ALTG, IQAI…TYWA, GLAI…SALV, GLIY…LIAE, LSAC…MVGA, VAVV…GMLA, WVQI…AIMV, ISAL…PHIL, GFIG…ILLV, FFLG…VAGL, VSKI…ILFE, IAFM…PIII, LGLS…VTIL, and YEYP…FFSI.

This sequence belongs to the sodium:solute symporter (SSF) (TC 2.A.21) family.

It localises to the cell inner membrane. Functionally, transports acetate. This Yersinia pestis bv. Antiqua (strain Antiqua) protein is Cation/acetate symporter ActP.